The primary structure comprises 1245 residues: TAL effector protein Brg11 (1245 aa).

2 disordered regions span residues 1–87 (MRIG…LVPE) and 173–205 (CPQA…PTFL). Residues 67–87 (PRRPLPVAPASAPPAPSLVPE) show a composition bias toward pro residues. The Nuclear localization signal 1 signature appears at 185 to 191 (RSARARR). One copy of the Cryptic repeat -1 repeat lies at 286 to 320 (LTRAHIVDIARQRSGDLALQALLPVATALTAAPLR). One copy of the Cryptic repeat 0 repeat lies at 321–354 (LSASQIATVAQYGERPAIQALYRLRRKLTRAPLH). Core repeat repeat units follow at residues 355–389 (LTPQ…APYR), 390–424 (LSTE…APYV), 425–459 (LDTE…APYA), 460–494 (LSTE…APYA), 495–529 (LSTE…VPYA), 530–564 (LSTE…APYA), 565–599 (LSTA…APYG), 600–634 (LSTE…APYA), 635–669 (LSTE…APYA), 670–704 (LSTA…APYA), 705–739 (LSTE…APYA), 740–774 (LNTE…APYA), 775–809 (LSTA…APYA), 810–844 (LSTE…APYG), 845–879 (LSTA…TPYD), and 880–914 (LNTA…APYA). A Cryptic repeat +1 repeat occupies 915 to 948 (LSTAQVVAIACISGQQALEAIEAHMPTLRQASHS). Residues 949–982 (LSPERVAAIACIGGRSAVEAVRQGLPVKAIRRIR) form a Cryptic repeat +2 repeat. Short sequence motifs (nuclear localization signal) lie at residues 980–983 (RIRR), 1108–1111 (HRKR), and 1145–1148 (RRKR). A disordered region spans residues 1096 to 1138 (SPGMAGQSACSPHRKRPAETAIAPRSIRRSPNNAGQPSEPWPD). An activation domain region spans residues 1237-1245 (DWLLQILET).

This sequence belongs to the transcription activator-like effector (TALE) family. RipTAL/RTL subfamily.

It localises to the secreted. It is found in the host nucleus. Exported into plant cells, where it is targeted to the nucleus and probably acts as a transcription factor. Binds DNA in a sequence-specific manner. May contribute to plant pathogenicity. The chain is TAL effector protein Brg11 from Ralstonia nicotianae (strain ATCC BAA-1114 / GMI1000) (Ralstonia solanacearum).